The following is a 342-amino-acid chain: MLQGHSSVFQALLGTFFTWGMTAAGAALVFVFSSGQRRILDGSLGFAAGVMLAASYWSLLAPAVEMATSSGGFGAFAFFPVAVGFTLGAAFVYLADLLMPHLGAAEDPQTTLALNFGSTLMKKKSDPEGPALLFPESELSIRIGRAGLLSDKSENGEAYQRKKAAATGLPEGPAVPVPSRGNLAQPGGSSWRRIALLILAITIHNVPEGLAVGVGFGAIEKTASATFESARNLAIGIGIQNFPEGLAVSLPLRGAGFSTWRAFWYGQLSGMVEPLAGVFGAFAVVLAEPILPYALAFAAGAMVYVVMDDIIPEAQISGNGKLASWASILGFVVMMSLDVGLG.

The next 7 membrane-spanning stretches (helical) occupy residues 12–32 (LLGTFFTWGMTAAGAALVFVF), 44–64 (LGFAAGVMLAASYWSLLAPAV), 72–92 (GFGAFAFFPVAVGFTLGAAFV), 194–214 (IALLILAITIHNVPEGLAVGV), 263–285 (FWYGQLSGMVEPLAGVFGAFAVV), 290–307 (ILPYALAFAAGAMVYVVM), and 322–342 (LASWASILGFVVMMSLDVGLG).

The protein belongs to the ZIP transporter (TC 2.A.5) family.

It is found in the cell membrane. Its subcellular location is the nucleus. The protein resides in the cytoplasm. The protein localises to the golgi apparatus. It catalyses the reaction Zn(2+)(in) = Zn(2+)(out). The enzyme catalyses Cu(2+)(in) = Cu(2+)(out). In terms of biological role, zinc importer that regulates cytosolic zinc concentrations either via zinc influx from the extracellular compartment or efflux from intracellular organelles such as Golgi apparatus. May transport copper ions as well. The transport mechanism remains to be elucidated. The sequence is that of Zinc transporter ZIP11 (SLC39A11) from Homo sapiens (Human).